Here is a 330-residue protein sequence, read N- to C-terminus: Aspartate--ammonia ligase (330 aa).

The protein belongs to the class-II aminoacyl-tRNA synthetase family. AsnA subfamily.

Its subcellular location is the cytoplasm. The enzyme catalyses L-aspartate + NH4(+) + ATP = L-asparagine + AMP + diphosphate + H(+). Its pathway is amino-acid biosynthesis; L-asparagine biosynthesis; L-asparagine from L-aspartate (ammonia route): step 1/1. This is Aspartate--ammonia ligase from Mannheimia succiniciproducens (strain KCTC 0769BP / MBEL55E).